We begin with the raw amino-acid sequence, 672 residues long: Transcription factor tau 91 kDa subunit (672 aa).

The tract at residues 1–158 (MAVIPAKKRG…SLGQKGRPIR (158 aa)) is required for DNA-binding. The a.T hook DNA-binding region spans 6 to 18 (AKKRGRPRKSVVA). 2 disordered regions span residues 24–45 (SLASPVSENSGSKRPRRNASKK) and 67–156 (VNNV…KGRP). Positions 71 to 100 (DDTDDDDFVLNDEGDGEESDNVEIEFENEL) are enriched in acidic residues. Residues 159–672 (LLKDLSSARD…AGLLTLEYLS (514 aa)) form a sufficient for interaction with TFC8 region. A disulfide bridge links C375 with C383.

As to quaternary structure, heterodimer with TFC8. Component of the TFIIIC complex composed of TFC1, TFC3, TFC4, TFC6, TFC7 and TFC8. The subunits are organized in two globular domains, tauA and tauB, connected by a proteolysis-sensitive and flexible linker. Interacts with TFC1, TFC3, TFC4 and directly with TFC8.

Its subcellular location is the nucleus. In terms of biological role, TFIIIC mediates tRNA and 5S RNA gene activation by binding to intragenic promoter elements. Upstream of the transcription start site, TFIIIC assembles the initiation complex TFIIIB-TFIIIC-tDNA, which is sufficient for RNA polymerase III recruitment and function. Part of the tauB domain of TFIIIC that binds boxB DNA promoter sites of tRNA and similar genes. Cooperates with TFC3 in DNA binding. This chain is Transcription factor tau 91 kDa subunit (TFC6), found in Saccharomyces cerevisiae (strain ATCC 204508 / S288c) (Baker's yeast).